Reading from the N-terminus, the 78-residue chain is Large ribosomal subunit protein bL28 (78 aa).

Belongs to the bacterial ribosomal protein bL28 family.

The protein is Large ribosomal subunit protein bL28 of Microcystis aeruginosa (strain NIES-843 / IAM M-2473).